A 476-amino-acid chain; its full sequence is Aspartyl/glutamyl-tRNA(Asn/Gln) amidotransferase subunit B (476 aa).

The protein belongs to the GatB/GatE family. GatB subfamily. In terms of assembly, heterotrimer of A, B and C subunits.

The catalysed reaction is L-glutamyl-tRNA(Gln) + L-glutamine + ATP + H2O = L-glutaminyl-tRNA(Gln) + L-glutamate + ADP + phosphate + H(+). The enzyme catalyses L-aspartyl-tRNA(Asn) + L-glutamine + ATP + H2O = L-asparaginyl-tRNA(Asn) + L-glutamate + ADP + phosphate + 2 H(+). Functionally, allows the formation of correctly charged Asn-tRNA(Asn) or Gln-tRNA(Gln) through the transamidation of misacylated Asp-tRNA(Asn) or Glu-tRNA(Gln) in organisms which lack either or both of asparaginyl-tRNA or glutaminyl-tRNA synthetases. The reaction takes place in the presence of glutamine and ATP through an activated phospho-Asp-tRNA(Asn) or phospho-Glu-tRNA(Gln). This is Aspartyl/glutamyl-tRNA(Asn/Gln) amidotransferase subunit B from Clostridium kluyveri (strain ATCC 8527 / DSM 555 / NBRC 12016 / NCIMB 10680 / K1).